Here is an 87-residue protein sequence, read N- to C-terminus: Phosphoribosyl-ATP pyrophosphatase (87 aa).

This sequence belongs to the PRA-PH family.

It localises to the cytoplasm. It catalyses the reaction 1-(5-phospho-beta-D-ribosyl)-ATP + H2O = 1-(5-phospho-beta-D-ribosyl)-5'-AMP + diphosphate + H(+). The protein operates within amino-acid biosynthesis; L-histidine biosynthesis; L-histidine from 5-phospho-alpha-D-ribose 1-diphosphate: step 2/9. This Nocardioides sp. (strain ATCC BAA-499 / JS614) protein is Phosphoribosyl-ATP pyrophosphatase.